A 430-amino-acid polypeptide reads, in one-letter code: Glutamate-1-semialdehyde 2,1-aminomutase (430 aa).

N6-(pyridoxal phosphate)lysine is present on Lys265.

Belongs to the class-III pyridoxal-phosphate-dependent aminotransferase family. HemL subfamily. Homodimer. The cofactor is pyridoxal 5'-phosphate.

It is found in the cytoplasm. The enzyme catalyses (S)-4-amino-5-oxopentanoate = 5-aminolevulinate. It functions in the pathway porphyrin-containing compound metabolism; protoporphyrin-IX biosynthesis; 5-aminolevulinate from L-glutamyl-tRNA(Glu): step 2/2. This Shewanella baltica (strain OS223) protein is Glutamate-1-semialdehyde 2,1-aminomutase.